We begin with the raw amino-acid sequence, 1012 residues long: F-box DNA helicase 1 (1012 aa).

The segment at 1–54 (MHLTADDCEALSRSTEGLSSLTQPLNQRRSRGDVNRGLQPTHRTRTQPGAQGRQ) is disordered. Over residues 12-27 (SRSTEGLSSLTQPLNQ) the composition is skewed to polar residues. Residues 185–234 (QGSIEDLPDEVLRSIFAFLPVTDLYQSLSLVCRRWRIIVGDPWFIPWKKL) form the F-box domain. The 266-residue stretch at 427–692 (THEQQRILNH…YYLTQSFRFG (266 aa)) folds into the UvrD-like helicase ATP-binding domain. ATP is bound at residue 448 to 455 (AFAGTGKT).

Belongs to the helicase family. UvrD subfamily. In terms of assembly, part of the SCF (SKP1-CUL1-F-box) E3 ubiquitin-protein ligase complex SCF(FBH1).

The protein resides in the nucleus. Its subcellular location is the chromosome. The catalysed reaction is Couples ATP hydrolysis with the unwinding of duplex DNA by translocating in the 3'-5' direction.. It catalyses the reaction ATP + H2O = ADP + phosphate + H(+). The protein operates within protein modification; protein ubiquitination. Functionally, 3'-5' DNA helicase and substrate-recognition component of the SCF(FBH1) E3 ubiquitin ligase complex that plays a key role in response to stalled/damaged replication forks. Involved in genome maintenance by acting as an anti-recombinogenic helicase and preventing extensive strand exchange during homologous recombination: promotes RAD51 filament dissolution from stalled forks, thereby inhibiting homologous recombination and preventing excessive recombination. Also promotes cell death and DNA double-strand breakage in response to replication stress: promotes the endonucleolytic DNA cleavage following prolonged replication stress via its helicase activity, possibly to eliminate cells with excessive replication stress. This Gallus gallus (Chicken) protein is F-box DNA helicase 1.